A 466-amino-acid polypeptide reads, in one-letter code: Glutamate decarboxylase alpha (466 aa).

Substrate contacts are provided by threonine 62 and asparagine 83. Residues 126-127 (SS), threonine 212, and histidine 275 contribute to the pyridoxal 5'-phosphate site. Lysine 276 carries the post-translational modification N6-(pyridoxal phosphate)lysine.

The protein belongs to the group II decarboxylase family. In terms of assembly, homohexamer. Pyridoxal 5'-phosphate serves as cofactor.

It carries out the reaction L-glutamate + H(+) = 4-aminobutanoate + CO2. Converts glutamate to gamma-aminobutyrate (GABA), consuming one intracellular proton in the reaction. The gad system helps to maintain a near-neutral intracellular pH when cells are exposed to extremely acidic conditions. The ability to survive transit through the acidic conditions of the stomach is essential for successful colonization of the mammalian host by commensal and pathogenic bacteria. The chain is Glutamate decarboxylase alpha (gadA) from Shigella flexneri.